Here is a 243-residue protein sequence, read N- to C-terminus: Type III pantothenate kinase (243 aa).

An ATP-binding site is contributed by 7 to 14 (DIGNTRLK). Residues Y95 and 102-105 (GIDR) contribute to the substrate site. The active-site Proton acceptor is the D104. T126 contacts ATP. Residue T177 coordinates substrate.

The protein belongs to the type III pantothenate kinase family. In terms of assembly, homodimer. NH4(+) is required as a cofactor. Requires K(+) as cofactor.

It is found in the cytoplasm. It catalyses the reaction (R)-pantothenate + ATP = (R)-4'-phosphopantothenate + ADP + H(+). The protein operates within cofactor biosynthesis; coenzyme A biosynthesis; CoA from (R)-pantothenate: step 1/5. Catalyzes the phosphorylation of pantothenate (Pan), the first step in CoA biosynthesis. The protein is Type III pantothenate kinase of Acinetobacter baylyi (strain ATCC 33305 / BD413 / ADP1).